Reading from the N-terminus, the 416-residue chain is UDP-N-acetylglucosamine 1-carboxyvinyltransferase (416 aa).

Residue Lys-22–Asn-23 coordinates phosphoenolpyruvate. Arg-92 serves as a coordination point for UDP-N-acetyl-alpha-D-glucosamine. Cys-116 functions as the Proton donor in the catalytic mechanism. 2-(S-cysteinyl)pyruvic acid O-phosphothioketal is present on Cys-116. Residues Asp-304 and Ile-326 each contribute to the UDP-N-acetyl-alpha-D-glucosamine site.

This sequence belongs to the EPSP synthase family. MurA subfamily.

Its subcellular location is the cytoplasm. It catalyses the reaction phosphoenolpyruvate + UDP-N-acetyl-alpha-D-glucosamine = UDP-N-acetyl-3-O-(1-carboxyvinyl)-alpha-D-glucosamine + phosphate. The protein operates within cell wall biogenesis; peptidoglycan biosynthesis. Its function is as follows. Cell wall formation. Adds enolpyruvyl to UDP-N-acetylglucosamine. This is UDP-N-acetylglucosamine 1-carboxyvinyltransferase from Solidesulfovibrio magneticus (strain ATCC 700980 / DSM 13731 / RS-1) (Desulfovibrio magneticus).